Here is a 156-residue protein sequence, read N- to C-terminus: Ubiquitin-like protein 4A (156 aa).

Positions 1 to 76 (MILTVKPLQG…LNLVIRPVGE (76 aa)) constitute a Ubiquitin-like domain.

As to quaternary structure, component of the bag6/bat3 complex.

Its subcellular location is the cytoplasm. It is found in the cytosol. The protein resides in the nucleus. Its function is as follows. As part of a cytosolic protein quality control complex, the bag6/bat3 complex, maintains misfolded and hydrophobic patches-containing proteins in a soluble state and participates in their proper delivery to the endoplasmic reticulum or alternatively can promote their sorting to the proteasome where they undergo degradation. The bag6/bat3 complex is involved in the post-translational delivery of tail-anchored/type II transmembrane proteins to the endoplasmic reticulum membrane. Similarly, the bag6/bat3 complex also functions as a sorting platform for proteins of the secretory pathway that are mislocalized to the cytosol either delivering them to the proteasome for degradation or to the endoplasmic reticulum. The bag6/bat3 complex also plays a role in the endoplasmic reticulum-associated degradation (ERAD), a quality control mechanism that eliminates unwanted proteins of the endoplasmic reticulum through their retrotranslocation to the cytosol and their targeting to the proteasome. It maintains these retrotranslocated proteins in an unfolded yet soluble state condition in the cytosol to ensure their proper delivery to the proteasome. The sequence is that of Ubiquitin-like protein 4A (ubl4a) from Anoplopoma fimbria (Sablefish).